A 204-amino-acid chain; its full sequence is Proteasome subunit beta type-3 (204 aa).

It belongs to the peptidase T1B family. In terms of assembly, the 26S proteasome consists of a 20S proteasome core and two 19S regulatory subunits. The 20S proteasome core is composed of 28 subunits that are arranged in four stacked rings, resulting in a barrel-shaped structure. The two end rings are each formed by seven alpha subunits, and the two central rings are each formed by seven beta subunits. The catalytic chamber with the active sites is on the inside of the barrel.

It is found in the cytoplasm. It localises to the nucleus. Non-catalytic component of the proteasome, a multicatalytic proteinase complex which is characterized by its ability to cleave peptides with Arg, Phe, Tyr, Leu, and Glu adjacent to the leaving group at neutral or slightly basic pH. The proteasome has an ATP-dependent proteolytic activity. This Oryza sativa subsp. japonica (Rice) protein is Proteasome subunit beta type-3 (PBC1).